A 721-amino-acid chain; its full sequence is Fatty acid oxidation complex subunit alpha (721 aa).

The interval 1-190 (MIYEGKAITV…KVGVVDAIVA (190 aa)) is enoyl-CoA hydratase/isomerase. Aspartate 297 is a substrate binding site. Residues 312 to 721 (RDVKQAAVLG…SFFGQASSEV (410 aa)) are 3-hydroxyacyl-CoA dehydrogenase. Residues methionine 325, aspartate 344, 401-403 (VVE), lysine 408, and serine 430 each bind NAD(+). Histidine 451 serves as the catalytic For 3-hydroxyacyl-CoA dehydrogenase activity. Residue asparagine 454 coordinates NAD(+). 2 residues coordinate substrate: asparagine 501 and tyrosine 660.

In the N-terminal section; belongs to the enoyl-CoA hydratase/isomerase family. This sequence in the C-terminal section; belongs to the 3-hydroxyacyl-CoA dehydrogenase family. As to quaternary structure, heterotetramer of two alpha chains (FadB) and two beta chains (FadA).

It catalyses the reaction a (3S)-3-hydroxyacyl-CoA + NAD(+) = a 3-oxoacyl-CoA + NADH + H(+). The enzyme catalyses a (3S)-3-hydroxyacyl-CoA = a (2E)-enoyl-CoA + H2O. It carries out the reaction a 4-saturated-(3S)-3-hydroxyacyl-CoA = a (3E)-enoyl-CoA + H2O. The catalysed reaction is (3S)-3-hydroxybutanoyl-CoA = (3R)-3-hydroxybutanoyl-CoA. It catalyses the reaction a (3Z)-enoyl-CoA = a 4-saturated (2E)-enoyl-CoA. The enzyme catalyses a (3E)-enoyl-CoA = a 4-saturated (2E)-enoyl-CoA. Its pathway is lipid metabolism; fatty acid beta-oxidation. Its function is as follows. Involved in the aerobic and anaerobic degradation of long-chain fatty acids via beta-oxidation cycle. Catalyzes the formation of 3-oxoacyl-CoA from enoyl-CoA via L-3-hydroxyacyl-CoA. It can also use D-3-hydroxyacyl-CoA and cis-3-enoyl-CoA as substrate. This chain is Fatty acid oxidation complex subunit alpha, found in Pseudomonas syringae pv. tomato (strain ATCC BAA-871 / DC3000).